A 446-amino-acid polypeptide reads, in one-letter code: tRNA-2-methylthio-N(6)-dimethylallyladenosine synthase (446 aa).

An MTTase N-terminal domain is found at 3 to 120 (KKIYIKTFGC…LPEMLKQRRS (118 aa)). The [4Fe-4S] cluster site is built by Cys-12, Cys-49, Cys-83, Cys-157, Cys-161, and Cys-164. A Radical SAM core domain is found at 143 to 375 (KVEGATAFVS…QAVIDQNTRR (233 aa)). In terms of domain architecture, TRAM spans 378-444 (DEMVGTVQRI…AYTLRGEIIV (67 aa)).

It belongs to the methylthiotransferase family. MiaB subfamily. Monomer. The cofactor is [4Fe-4S] cluster.

The protein resides in the cytoplasm. The catalysed reaction is N(6)-dimethylallyladenosine(37) in tRNA + (sulfur carrier)-SH + AH2 + 2 S-adenosyl-L-methionine = 2-methylsulfanyl-N(6)-dimethylallyladenosine(37) in tRNA + (sulfur carrier)-H + 5'-deoxyadenosine + L-methionine + A + S-adenosyl-L-homocysteine + 2 H(+). Catalyzes the methylthiolation of N6-(dimethylallyl)adenosine (i(6)A), leading to the formation of 2-methylthio-N6-(dimethylallyl)adenosine (ms(2)i(6)A) at position 37 in tRNAs that read codons beginning with uridine. This Janthinobacterium sp. (strain Marseille) (Minibacterium massiliensis) protein is tRNA-2-methylthio-N(6)-dimethylallyladenosine synthase.